A 31-amino-acid chain; its full sequence is Potassium channel toxin alpha-KTx 5.4 (31 aa).

3 cysteine pairs are disulfide-bonded: cysteine 3/cysteine 21, cysteine 8/cysteine 26, and cysteine 12/cysteine 28. The segment at 6–9 (RRCE) is [R/K]XCQ motif. Tyrosine 31 carries the tyrosine amide modification.

It belongs to the short scorpion toxin superfamily. Potassium channel inhibitor family. Alpha-KTx 05 subfamily. As to expression, expressed by the venom gland.

It localises to the secreted. Functionally, blocks small conductance calcium-activated potassium channels. Shows activity on KCa2.2/KCNN2 (IC(50)=0.0243 nM), KCa2.3/KCNN3 (IC(50)=1.7 nM), and KCa2.1/KCNN1 (IC(50)=42 nM). Induces cell death when tested on human T lymphoblastic leukemia Jurkat E6.1 and human breast cancer MDA-MB-231 cell lines which constituvely express KCa2.2/KCNN2, but not on human peripheral blood lymphocytes (which do not express KCa2.2/KCNN2). The chain is Potassium channel toxin alpha-KTx 5.4 from Hottentotta tamulus (Eastern Indian scorpion).